Reading from the N-terminus, the 727-residue chain is Phosphoribosylformylglycinamidine synthase subunit PurL (727 aa).

The active site involves His-47. 2 residues coordinate ATP: Tyr-50 and Lys-82. A Mg(2+)-binding site is contributed by Glu-84. Substrate contacts are provided by residues 85-88 (SHNH) and Arg-107. The active-site Proton acceptor is His-86. Residue Asp-108 coordinates Mg(2+). Gln-229 is a binding site for substrate. Asp-257 contacts Mg(2+). Position 301–303 (301–303 (ESQ)) interacts with substrate. Residues Asp-486 and Gly-523 each contribute to the ATP site. Residue Asn-524 participates in Mg(2+) binding. Ser-526 serves as a coordination point for substrate.

Belongs to the FGAMS family. Monomer. Part of the FGAM synthase complex composed of 1 PurL, 1 PurQ and 2 PurS subunits.

The protein localises to the cytoplasm. It carries out the reaction N(2)-formyl-N(1)-(5-phospho-beta-D-ribosyl)glycinamide + L-glutamine + ATP + H2O = 2-formamido-N(1)-(5-O-phospho-beta-D-ribosyl)acetamidine + L-glutamate + ADP + phosphate + H(+). It functions in the pathway purine metabolism; IMP biosynthesis via de novo pathway; 5-amino-1-(5-phospho-D-ribosyl)imidazole from N(2)-formyl-N(1)-(5-phospho-D-ribosyl)glycinamide: step 1/2. Functionally, part of the phosphoribosylformylglycinamidine synthase complex involved in the purines biosynthetic pathway. Catalyzes the ATP-dependent conversion of formylglycinamide ribonucleotide (FGAR) and glutamine to yield formylglycinamidine ribonucleotide (FGAM) and glutamate. The FGAM synthase complex is composed of three subunits. PurQ produces an ammonia molecule by converting glutamine to glutamate. PurL transfers the ammonia molecule to FGAR to form FGAM in an ATP-dependent manner. PurS interacts with PurQ and PurL and is thought to assist in the transfer of the ammonia molecule from PurQ to PurL. This Petrotoga mobilis (strain DSM 10674 / SJ95) protein is Phosphoribosylformylglycinamidine synthase subunit PurL.